A 264-amino-acid polypeptide reads, in one-letter code: Low molecular mass lipoprotein PBMHP-12 (264 aa).

The first 16 residues, 1–16 (MKLLVVFAMCVPAASA), serve as a signal peptide directing secretion.

This sequence belongs to the 30 kDa lipoprotein family.

It localises to the secreted. This chain is Low molecular mass lipoprotein PBMHP-12, found in Bombyx mori (Silk moth).